We begin with the raw amino-acid sequence, 1056 residues long: Kinesin-like protein KIF11 (1056 aa).

Positions 18–359 (NIQVVVRCRP…LEYAHRAKNI (342 aa)) constitute a Kinesin motor domain. Position 105–112 (105–112 (GQTGTGKT)) interacts with ATP. Residue Lys-146 is modified to N6-acetyllysine. 2 coiled-coil regions span residues 364–480 (EVNQ…KEEY) and 736–763 (LEEK…DIVN). At Thr-458 the chain carries Phosphothreonine. A Glycyl lysine isopeptide (Lys-Gly) (interchain with G-Cter in SUMO2) cross-link involves residue Lys-477. Thr-925 carries the phosphothreonine modification. The residue at position 926 (Thr-926) is a Phosphothreonine; by CDK1. Ser-1033 is subject to Phosphoserine; by NEK6. A Glycyl lysine isopeptide (Lys-Gly) (interchain with G-Cter in ubiquitin) cross-link involves residue Lys-1034.

This sequence belongs to the TRAFAC class myosin-kinesin ATPase superfamily. Kinesin family. BimC subfamily. In terms of assembly, interacts with the thyroid hormone receptor in the presence of thyroid hormone. Component of a large chromatin remodeling complex, at least composed of MYSM1, PCAF, RBM10 and KIF11/TRIP5. Interacts (via C-terminus) with the kinase NEK6 in both interphase and mitosis. Interacts with RARRES1 and AGBL2. Interacts with TPX2. Phosphorylated exclusively on serine during S phase, but on both serine and Thr-926 during mitosis, so controlling the association of KIF11 with the spindle apparatus (probably during early prophase). In terms of processing, a subset of this protein primarily localized at the spindle pole is phosphorylated by NEK6 during mitosis; phosphorylation is required for mitotic function. Post-translationally, ubiquitinated at Lys-1034 by UHRF1 via 'Lys-63'-linked ubiquitin chains, leading to interaction with spindle assembly factor TPX2, thereby ensuring accurate distribution to the spindles during metaphase.

It localises to the cytoplasm. Its subcellular location is the cytoskeleton. The protein localises to the spindle pole. Its function is as follows. Motor protein required for establishing a bipolar spindle and thus contributing to chromosome congression during mitosis. Required in non-mitotic cells for transport of secretory proteins from the Golgi complex to the cell surface. This chain is Kinesin-like protein KIF11 (KIF11), found in Homo sapiens (Human).